A 102-amino-acid chain; its full sequence is Heat shock protein HspQ (102 aa).

The protein belongs to the HspQ family.

It localises to the cytoplasm. Involved in the degradation of certain denaturated proteins, including DnaA, during heat shock stress. This Pectobacterium atrosepticum (strain SCRI 1043 / ATCC BAA-672) (Erwinia carotovora subsp. atroseptica) protein is Heat shock protein HspQ.